The primary structure comprises 943 residues: Isoleucine--tRNA ligase (943 aa).

A 'HIGH' region motif is present at residues P58–H68. E567 contributes to the L-isoleucyl-5'-AMP binding site. Residues K608–S612 carry the 'KMSKS' region motif. K611 is a binding site for ATP. Residues C906, C909, C926, and C929 each coordinate Zn(2+).

The protein belongs to the class-I aminoacyl-tRNA synthetase family. IleS type 1 subfamily. As to quaternary structure, monomer. Zn(2+) serves as cofactor.

Its subcellular location is the cytoplasm. The enzyme catalyses tRNA(Ile) + L-isoleucine + ATP = L-isoleucyl-tRNA(Ile) + AMP + diphosphate. Catalyzes the attachment of isoleucine to tRNA(Ile). As IleRS can inadvertently accommodate and process structurally similar amino acids such as valine, to avoid such errors it has two additional distinct tRNA(Ile)-dependent editing activities. One activity is designated as 'pretransfer' editing and involves the hydrolysis of activated Val-AMP. The other activity is designated 'posttransfer' editing and involves deacylation of mischarged Val-tRNA(Ile). The polypeptide is Isoleucine--tRNA ligase (Pseudomonas aeruginosa (strain LESB58)).